A 405-amino-acid chain; its full sequence is MTSVMSHEFQLATAETWPNPWPMYRALRDHDPVHHVVPPQRPEYDYYVLSRHADVWSAARDHQTFSSAQGLTVNYGELEMIGLHDTPPMVMQDPPVHTEFRKLVSRGFTPRQVETVEPTVRKFVVERLEKLRANGGGDIVTELFKPLPSMVVAHYLGVPEEDWTQFDGWTQAIVAANAVDGATTGALDAVGSMMAYFTGLIERRRTEPADDAISHLVAAGVGADGDTAGTLSILAFTFTMVTGGNDTVTGMLGGSMPLLHRRPDQRRLLLDDPEGIPDAVEELLRLTSPVQGLARTTTRDVTIGDTTIPAGRRVLLLYGSANRDERQYGPDAAELDVTRCPRNILTFSHGAHHCLGAAAARMQCRVALTELLARCPDFEVAESRIVWSGGSYVRRPLSVPFRVTS.

Asp-93 and His-97 together coordinate substrate. Positions 101, 243, 295, 318, 348, 352, and 354 each coordinate heme.

The protein belongs to the cytochrome P450 family. Homodimer. The cofactor is heme.

This Mycobacterium tuberculosis (strain CDC 1551 / Oshkosh) protein is Cytochrome P450 130 (cyp130).